Consider the following 233-residue polypeptide: PEP2-like protein NECHADRAFT_97050 (233 aa).

This sequence belongs to the PEP2 family.

Its function is as follows. May contribute to the ability of the fungus to cause disease on pea plants. The chain is PEP2-like protein NECHADRAFT_97050 from Fusarium vanettenii (strain ATCC MYA-4622 / CBS 123669 / FGSC 9596 / NRRL 45880 / 77-13-4) (Fusarium solani subsp. pisi).